A 463-amino-acid polypeptide reads, in one-letter code: ATP-dependent protease ATPase subunit HslU (463 aa).

ATP contacts are provided by residues Val-21, 63 to 68, Asp-276, Glu-341, and Arg-413; that span reads GVGKTE.

Belongs to the ClpX chaperone family. HslU subfamily. In terms of assembly, a double ring-shaped homohexamer of HslV is capped on each side by a ring-shaped HslU homohexamer. The assembly of the HslU/HslV complex is dependent on binding of ATP.

It localises to the cytoplasm. ATPase subunit of a proteasome-like degradation complex; this subunit has chaperone activity. The binding of ATP and its subsequent hydrolysis by HslU are essential for unfolding of protein substrates subsequently hydrolyzed by HslV. HslU recognizes the N-terminal part of its protein substrates and unfolds these before they are guided to HslV for hydrolysis. The chain is ATP-dependent protease ATPase subunit HslU from Thermotoga petrophila (strain ATCC BAA-488 / DSM 13995 / JCM 10881 / RKU-1).